A 325-amino-acid polypeptide reads, in one-letter code: Tetraacyldisaccharide 4'-kinase (325 aa).

Threonine 55–threonine 62 lines the ATP pocket.

The protein belongs to the LpxK family.

The enzyme catalyses a lipid A disaccharide + ATP = a lipid IVA + ADP + H(+). It functions in the pathway glycolipid biosynthesis; lipid IV(A) biosynthesis; lipid IV(A) from (3R)-3-hydroxytetradecanoyl-[acyl-carrier-protein] and UDP-N-acetyl-alpha-D-glucosamine: step 6/6. Its function is as follows. Transfers the gamma-phosphate of ATP to the 4'-position of a tetraacyldisaccharide 1-phosphate intermediate (termed DS-1-P) to form tetraacyldisaccharide 1,4'-bis-phosphate (lipid IVA). This chain is Tetraacyldisaccharide 4'-kinase, found in Salmonella agona (strain SL483).